Here is a 315-residue protein sequence, read N- to C-terminus: Zinc finger protein 691 (315 aa).

A compositionally biased stretch (polar residues) spans 1–10 (MSLCSPTHSA). The interval 1–90 (MSLCSPTHSA…QETHPKKPWQ (90 aa)) is disordered. Positions 33 to 58 (GSEKEQSPEPHLPEEGEGGKPWRVDD) are enriched in basic and acidic residues. Ser-39, Ser-75, and Ser-77 each carry phosphoserine. Lys-113 participates in a covalent cross-link: Glycyl lysine isopeptide (Lys-Gly) (interchain with G-Cter in SUMO2). 7 consecutive C2H2-type zinc fingers follow at residues 115 to 137 (FICA…QRIH), 143 to 165 (YKCS…ERIH), 171 to 193 (YKCP…QQDH), 199 to 221 (YRCD…HRTH), 227 to 249 (YICC…HRTH), 255 to 277 (YECT…QRTH), and 283 to 305 (YRCT…QKTH).

This sequence belongs to the krueppel C2H2-type zinc-finger protein family.

Its subcellular location is the nucleus. May be involved in transcriptional regulation. The polypeptide is Zinc finger protein 691 (ZNF691) (Homo sapiens (Human)).